A 162-amino-acid polypeptide reads, in one-letter code: Phosphopantetheine adenylyltransferase (162 aa).

Ser11 contacts substrate. ATP contacts are provided by residues Ser11 to Phe12 and His19. Substrate-binding residues include Lys43, Val76, and Arg90. ATP is bound by residues Gly91–Arg93, Glu101, and His126–Ser132.

Belongs to the bacterial CoaD family. As to quaternary structure, homohexamer. Requires Mg(2+) as cofactor.

Its subcellular location is the cytoplasm. It catalyses the reaction (R)-4'-phosphopantetheine + ATP + H(+) = 3'-dephospho-CoA + diphosphate. The protein operates within cofactor biosynthesis; coenzyme A biosynthesis; CoA from (R)-pantothenate: step 4/5. Reversibly transfers an adenylyl group from ATP to 4'-phosphopantetheine, yielding dephospho-CoA (dPCoA) and pyrophosphate. This chain is Phosphopantetheine adenylyltransferase, found in Streptococcus pneumoniae (strain Hungary19A-6).